Reading from the N-terminus, the 309-residue chain is 2-oxoacid:ferredoxin oxidoreductase 2, subunit beta (309 aa).

[4Fe-4S] cluster-binding residues include C17, C20, and C51. Residues 49–52 (IGCS) and H68 contribute to the thiamine diphosphate site. D93 serves as a coordination point for Mg(2+). Residue 94–95 (GD) participates in thiamine diphosphate binding. Mg(2+) is bound by residues N121 and V123. Residue 125-126 (GL) participates in thiamine diphosphate binding. C200 is a binding site for [4Fe-4S] cluster.

Heterodimer composed of an alpha and a beta subunit. [4Fe-4S] cluster serves as cofactor. The cofactor is thiamine diphosphate. Requires Mg(2+) as cofactor.

It catalyses the reaction a 2-oxocarboxylate + 2 oxidized [2Fe-2S]-[ferredoxin] + CoA = an acyl-CoA + 2 reduced [2Fe-2S]-[ferredoxin] + CO2 + H(+). Catalyzes the coenzyme A-dependent oxidative decarboxylation of different 2-oxoacids such as pyruvate, 2-oxobutyrate, glyoxylate and 2-oxoglutarate to form their CoA derivatives. The polypeptide is 2-oxoacid:ferredoxin oxidoreductase 2, subunit beta (Aeropyrum pernix (strain ATCC 700893 / DSM 11879 / JCM 9820 / NBRC 100138 / K1)).